Consider the following 559-residue polypeptide: 2-isopropylmalate synthase (559 aa).

Residues 33–307 (PIWCSSDLRD…DPQLDFSDID (275 aa)) enclose the Pyruvate carboxyltransferase domain. Mg(2+) contacts are provided by Asp-42, His-246, His-248, and Asn-282. Residues 439–559 (ANTPYALVSH…SLSQQEAKAA (121 aa)) are regulatory domain.

It belongs to the alpha-IPM synthase/homocitrate synthase family. LeuA type 2 subfamily. In terms of assembly, homodimer. The cofactor is Mg(2+).

It localises to the cytoplasm. It catalyses the reaction 3-methyl-2-oxobutanoate + acetyl-CoA + H2O = (2S)-2-isopropylmalate + CoA + H(+). The protein operates within amino-acid biosynthesis; L-leucine biosynthesis; L-leucine from 3-methyl-2-oxobutanoate: step 1/4. Functionally, catalyzes the condensation of the acetyl group of acetyl-CoA with 3-methyl-2-oxobutanoate (2-ketoisovalerate) to form 3-carboxy-3-hydroxy-4-methylpentanoate (2-isopropylmalate). In Pseudomonas fluorescens (strain SBW25), this protein is 2-isopropylmalate synthase.